A 155-amino-acid chain; its full sequence is Protein archease-like (155 aa).

D26, D154, and I155 together coordinate Ca(2+).

The protein belongs to the archease family.

Functionally, component of the tRNA-splicing ligase complex required to facilitate the enzymatic turnover of catalytic subunit RtcB (F16A11.2). This chain is Protein archease-like, found in Caenorhabditis elegans.